Consider the following 912-residue polypeptide: Probable transmembrane GTPase FZO-like, chloroplastic (912 aa).

The N-terminal 54 residues, 1-54 (MRTLISHRQCVTSPFLISAASPPFPGRCFKLSSFTPPRHRRFSSLSIRNISHES), are a transit peptide targeting the chloroplast. The interval 51-71 (SHESADQTSSSRPRTLYPGGY) is disordered. The Stromal segment spans residues 55 to 773 (ADQTSSSRPR…SKRLEQDIRE (719 aa)). Residues 359–364 (NSGKST) and S521 contribute to the GTP site. Residues 774 to 794 (VFFVTVGGLGAAGLSASLLTS) form a helical membrane-spanning segment. The Chloroplast intermembrane segment spans residues 795-801 (VLPTTLE). A helical membrane pass occupies residues 802–822 (DLLALGLCSAGGYVAIANFPY). Over 823–912 (RRQAIIGKVN…LHVSRDEMRL (90 aa)) the chain is Stromal. Residues 877–904 (DRLLGIQKELSDIRSKLQLLQVDIDNLH) are a coiled coil.

Belongs to the TRAFAC class dynamin-like GTPase superfamily. Dynamin/Fzo/YdjA family. Mitofusin subfamily.

It localises to the plastid. The protein resides in the chloroplast inner membrane. The protein localises to the chloroplast thylakoid membrane. Its function is as follows. Probable membrane-remodeling GTPase that plays a unique role in the in the determination of thylakoid and chloroplast morphology and regulates organization of the thylakoid network. Not involved in the determination of mitochondrial morphology or ultrastructure. The protein is Probable transmembrane GTPase FZO-like, chloroplastic of Arabidopsis thaliana (Mouse-ear cress).